Reading from the N-terminus, the 79-residue chain is uncharacterized protein (79 aa).

Residues 51–79 are disordered; it reads PAQFPKVQRPPTLLGGKNTSTQTTLHPVI. The segment covering 67–79 has biased composition (polar residues); the sequence is KNTSTQTTLHPVI.

This is an uncharacterized protein from Homo sapiens (Human).